A 241-amino-acid polypeptide reads, in one-letter code: Serine protease 58 (241 aa).

The signal sequence occupies residues 1-17 (MKFILLWALLNLTVALA). A Peptidase S1 domain is found at 18–239 (FNPDYTVSST…YIPWIENVIQ (222 aa)). A disulfide bond links Cys41 and Cys57. Residues His56 and Asp101 each act as charge relay system in the active site. 3 disulfide bridges follow: Cys133-Cys201, Cys165-Cys180, and Cys191-Cys215. Asn156 and Asn173 each carry an N-linked (GlcNAc...) asparagine glycan. Ser195 (charge relay system) is an active-site residue.

It belongs to the peptidase S1 family.

It localises to the secreted. It carries out the reaction Preferential cleavage: Arg-|-Xaa, Lys-|-Xaa.. The chain is Serine protease 58 (PRSS58) from Homo sapiens (Human).